The chain runs to 203 residues: Urease accessory protein UreG (203 aa).

Position 10–17 (10–17 (GPVGAGKT)) interacts with GTP.

It belongs to the SIMIBI class G3E GTPase family. UreG subfamily. In terms of assembly, homodimer. UreD, UreF and UreG form a complex that acts as a GTP-hydrolysis-dependent molecular chaperone, activating the urease apoprotein by helping to assemble the nickel containing metallocenter of UreC. The UreE protein probably delivers the nickel.

The protein localises to the cytoplasm. Functionally, facilitates the functional incorporation of the urease nickel metallocenter. This process requires GTP hydrolysis, probably effectuated by UreG. This Kocuria rhizophila (strain ATCC 9341 / DSM 348 / NBRC 103217 / DC2201) protein is Urease accessory protein UreG.